Consider the following 126-residue polypeptide: Aspartate 1-decarboxylase (126 aa).

The Schiff-base intermediate with substrate; via pyruvic acid role is filled by S25. A Pyruvic acid (Ser) modification is found at S25. T57 is a substrate binding site. Y58 serves as the catalytic Proton donor. 73–75 (GAA) contributes to the substrate binding site.

The protein belongs to the PanD family. Heterooctamer of four alpha and four beta subunits. Pyruvate is required as a cofactor. In terms of processing, is synthesized initially as an inactive proenzyme, which is activated by self-cleavage at a specific serine bond to produce a beta-subunit with a hydroxyl group at its C-terminus and an alpha-subunit with a pyruvoyl group at its N-terminus.

It is found in the cytoplasm. It catalyses the reaction L-aspartate + H(+) = beta-alanine + CO2. The protein operates within cofactor biosynthesis; (R)-pantothenate biosynthesis; beta-alanine from L-aspartate: step 1/1. Catalyzes the pyruvoyl-dependent decarboxylation of aspartate to produce beta-alanine. This chain is Aspartate 1-decarboxylase, found in Escherichia coli O6:H1 (strain CFT073 / ATCC 700928 / UPEC).